The primary structure comprises 682 residues: DNA-directed RNA polymerase subunit beta' (682 aa).

Zn(2+)-binding residues include C69, C71, C87, and C90. Residues D489, D491, and D493 each contribute to the Mg(2+) site.

This sequence belongs to the RNA polymerase beta' chain family. RpoC1 subfamily. As to quaternary structure, in plastids the minimal PEP RNA polymerase catalytic core is composed of four subunits: alpha, beta, beta', and beta''. When a (nuclear-encoded) sigma factor is associated with the core the holoenzyme is formed, which can initiate transcription. Requires Mg(2+) as cofactor. It depends on Zn(2+) as a cofactor.

The protein resides in the plastid. It is found in the chloroplast. It carries out the reaction RNA(n) + a ribonucleoside 5'-triphosphate = RNA(n+1) + diphosphate. Functionally, DNA-dependent RNA polymerase catalyzes the transcription of DNA into RNA using the four ribonucleoside triphosphates as substrates. This chain is DNA-directed RNA polymerase subunit beta', found in Hordeum vulgare (Barley).